The sequence spans 222 residues: Tegument protein UL26 (222 aa).

Belongs to the herpesviridae US22 family. Interacts with UL25. Interacts with ISGylation machinery components ISG15, UBA7 and HERC5; these interactions inhibit global protein ISGylation. Post-translationally, ISGylated; ISGylation regulates UL26 stability and inhibits its activities to suppress NF-kappa-B signaling.

The protein resides in the virion tegument. Its subcellular location is the host nucleus. Functionally, plays a role in the inhibition of host NF-kappa-B. This inhibition affects both the canonical and the non-canonical pathways. Blocks the induction of host IKK phosphorylation. May also influence the normal phosphorylation state of several tegument proteins including pp28 in virions. Also suppresses virus-induced ISGylation independent of its own ISGylation. The sequence is that of Tegument protein UL26 (UL26) from Homo sapiens (Human).